The primary structure comprises 230 residues: Claudin-2 (230 aa).

Topologically, residues 1–7 (MASLGLQ) are cytoplasmic. The helical transmembrane segment at 8–28 (LVGYILGLLGLLGTLVAMLLP) threads the bilayer. Over 29-81 (SWKTSSYVGASIVTAVGFSKGLWMECATHSTGITQCDIYSTLLGLPADIQAAQ) the chain is Extracellular. The cysteines at positions 54 and 64 are disulfide-linked. The chain crosses the membrane as a helical span at residues 82-102 (AMMVTSSAISSLACIISVVGM). The Cytoplasmic portion of the chain corresponds to 103–116 (RCTVFCQESRAKDR). The chain crosses the membrane as a helical span at residues 117-137 (VAVAGGVFFILGGLLGFIPVA). Over 138 to 162 (WNLHGILRDFYSPLVPDSMKFEIGE) the chain is Extracellular. The helical transmembrane segment at 163–183 (ALYLGIISSLFSLIAGIILCF) threads the bilayer. Residues 184–230 (SCSSQRNRSNYYDAYQAQPLATRSSPRPGQPPKVKSEFNSYSLTGYV) lie on the Cytoplasmic side of the membrane. A disordered region spans residues 205–230 (TRSSPRPGQPPKVKSEFNSYSLTGYV). Lys-218 participates in a covalent cross-link: Glycyl lysine isopeptide (Lys-Gly) (interchain with G-Cter in SUMO). A phosphoserine mark is found at Ser-219 and Ser-223. Residues 220–230 (EFNSYSLTGYV) are compositionally biased toward polar residues. The interval 229–230 (YV) is interactions with TJP1, TJP2 and TJP3.

It belongs to the claudin family. As to quaternary structure, can form homo- and heteropolymers with other claudins to mediate paracellular barrier and channel functions of tight junctions in response to physiological stimuli. Homopolymers interact with CLDN3, but not CLDN1, homopolymers. Directly interacts with TJP1/ZO-1, TJP2/ZO-2 and TJP3/ZO-3. Post-translationally, the disulfide bond is necessary for pore formation, but is not required for correct protein trafficking.

It localises to the cell junction. The protein resides in the tight junction. It is found in the cell membrane. The catalysed reaction is Na(+)(in) = Na(+)(out). It catalyses the reaction K(+)(in) = K(+)(out). It carries out the reaction Rb(+)(in) = Rb(+)(out). The enzyme catalyses Li(+)(in) = Li(+)(out). The catalysed reaction is Cs(+)(in) = Cs(+)(out). It catalyses the reaction Ca(2+)(in) = Ca(2+)(out). It carries out the reaction methylamine(out) = methylamine(in). The enzyme catalyses choline(out) = choline(in). The catalysed reaction is H2O(in) = H2O(out). Functionally, forms paracellular channels: polymerizes in tight junction strands with cation- and water-selective channels through the strands, conveying epithelial permeability in a process known as paracellular tight junction permeability. In intestinal epithelium, allows for sodium and water fluxes from the peritoneal side to the lumen of the intestine to regulate nutrient absorption and clear enteric pathogens as part of mucosal immune response. In kidney, allows passive sodium and calcium reabsorption across proximal tubules from the lumen back to the bloodstream. In the hepatobiliary tract, allows paracellular water and cation fluxes in the hepatic perivenous areas and biliary epithelium to generate bile flow and maintain osmotic gradients. The chain is Claudin-2 from Homo sapiens (Human).